The primary structure comprises 210 residues: Orotate phosphoribosyltransferase (210 aa).

5-phospho-alpha-D-ribose 1-diphosphate-binding positions include Arg94, Lys98, His100, and 120–128 (EDLISTGGS). Ser124 contributes to the orotate binding site.

Belongs to the purine/pyrimidine phosphoribosyltransferase family. PyrE subfamily. Homodimer. Mg(2+) serves as cofactor.

The enzyme catalyses orotidine 5'-phosphate + diphosphate = orotate + 5-phospho-alpha-D-ribose 1-diphosphate. It participates in pyrimidine metabolism; UMP biosynthesis via de novo pathway; UMP from orotate: step 1/2. Catalyzes the transfer of a ribosyl phosphate group from 5-phosphoribose 1-diphosphate to orotate, leading to the formation of orotidine monophosphate (OMP). The polypeptide is Orotate phosphoribosyltransferase (Bacillus cereus (strain ATCC 10987 / NRS 248)).